Consider the following 308-residue polypeptide: Mitoferrin (308 aa).

6 helical membrane passes run 13–29, 69–89, 111–131, 168–184, 213–233, and 285–302; these read GGSF…AGFA, ITGL…SHAV, IKVG…ASPM, YTTT…VYFA, LVAG…FDVV, and MVFH…YEYF. 3 Solcar repeats span residues 14–100, 108–192, and 207–305; these read GSFY…LKFK, HHPI…LKKI, and YQLI…FKFI.

The protein belongs to the mitochondrial carrier (TC 2.A.29) family.

The protein resides in the mitochondrion inner membrane. In terms of biological role, mitochondrial solute carriers shuttle metabolites, nucleotides, and cofactors through the mitochondrial inner membrane. Mitochondrial iron transporter that mediates iron uptake. Probably required for heme synthesis of hemoproteins and Fe-S cluster assembly. The protein is Mitoferrin (mcfF) of Dictyostelium discoideum (Social amoeba).